The following is a 321-amino-acid chain: Lipoyl synthase (321 aa).

Residues Cys-68, Cys-73, Cys-79, Cys-94, Cys-98, Cys-101, and Ser-308 each contribute to the [4Fe-4S] cluster site. The region spanning Phe-80 to Thr-297 is the Radical SAM core domain.

The protein belongs to the radical SAM superfamily. Lipoyl synthase family. It depends on [4Fe-4S] cluster as a cofactor.

It localises to the cytoplasm. It catalyses the reaction [[Fe-S] cluster scaffold protein carrying a second [4Fe-4S](2+) cluster] + N(6)-octanoyl-L-lysyl-[protein] + 2 oxidized [2Fe-2S]-[ferredoxin] + 2 S-adenosyl-L-methionine + 4 H(+) = [[Fe-S] cluster scaffold protein] + N(6)-[(R)-dihydrolipoyl]-L-lysyl-[protein] + 4 Fe(3+) + 2 hydrogen sulfide + 2 5'-deoxyadenosine + 2 L-methionine + 2 reduced [2Fe-2S]-[ferredoxin]. It functions in the pathway protein modification; protein lipoylation via endogenous pathway; protein N(6)-(lipoyl)lysine from octanoyl-[acyl-carrier-protein]: step 2/2. In terms of biological role, catalyzes the radical-mediated insertion of two sulfur atoms into the C-6 and C-8 positions of the octanoyl moiety bound to the lipoyl domains of lipoate-dependent enzymes, thereby converting the octanoylated domains into lipoylated derivatives. The polypeptide is Lipoyl synthase (Serratia proteamaculans (strain 568)).